Here is a 476-residue protein sequence, read N- to C-terminus: Doublecortin domain-containing protein 2 (476 aa).

Doublecortin domains follow at residues Lys-17–Leu-100 and Cys-139–Ser-221. A disordered region spans residues Phe-234 to Ala-476. The span at Ser-261–Gln-272 shows a compositional bias: polar residues. Residue Ser-270 is modified to Phosphoserine. A compositionally biased stretch (basic and acidic residues) spans Lys-279–Thr-289. Residues Lys-296–Asn-306 show a composition bias toward polar residues. Positions Glu-354–Phe-366 are enriched in basic and acidic residues. Residues Glu-415 to Val-426 are compositionally biased toward low complexity. Residues Asp-446–Val-455 show a composition bias toward basic and acidic residues.

Interacts with DVL1, DVL2 and DVL3. As to expression, ubiquitously expressed. In brain, highly expressed in the entorhinal cortex, inferior temporal cortex, medial temporal cortex, hypothalamus, amygdala and hippocampus. Expressed in liver by cholangiocytes, the epithelial cells of the bile ducts (at protein level).

The protein resides in the cell projection. It localises to the cilium. The protein localises to the cytoplasm. Its subcellular location is the cytoskeleton. It is found in the cilium axoneme. The protein resides in the kinocilium. Functionally, protein that plays a role in the inhibition of canonical Wnt signaling pathway. May be involved in neuronal migration during development of the cerebral neocortex. Involved in the control of ciliogenesis and ciliary length. The sequence is that of Doublecortin domain-containing protein 2 (DCDC2) from Homo sapiens (Human).